A 315-amino-acid polypeptide reads, in one-letter code: Solute carrier family 25 member 32 (315 aa).

Solcar repeat units lie at residues His20–Tyr109, Leu118–Lys209, and Leu222–Phe306. A run of 6 helical transmembrane segments spans residues Leu26–Leu43, Val89–Ile106, Tyr123–Val143, Phe186–Tyr203, Tyr227–Tyr243, and Gly281–Tyr300.

Belongs to the mitochondrial carrier (TC 2.A.29) family.

Its subcellular location is the mitochondrion inner membrane. The catalysed reaction is FAD(in) = FAD(out). Its function is as follows. Facilitates flavin adenine dinucleotide (FAD) translocation across the mitochondrial inner membrane into the mitochondrial matrix where it acts as a redox cofactor to assist flavoenzyme activities in fundamental metabolic processes including fatty acid beta-oxidation, amino acid and choline metabolism as well as mitochondrial electron transportation. In particular, provides FAD to DLD dehydrogenase of the glycine cleavage system, part of mitochondrial one-carbon metabolic pathway involved in neural tube closure in early embryogenesis. The protein is Solute carrier family 25 member 32 of Macaca fascicularis (Crab-eating macaque).